A 513-amino-acid polypeptide reads, in one-letter code: ATP synthase subunit alpha (513 aa).

An ATP-binding site is contributed by 169 to 176 (GDRQTGKT).

The protein belongs to the ATPase alpha/beta chains family. In terms of assembly, F-type ATPases have 2 components, CF(1) - the catalytic core - and CF(0) - the membrane proton channel. CF(1) has five subunits: alpha(3), beta(3), gamma(1), delta(1), epsilon(1). CF(0) has three main subunits: a(1), b(2) and c(9-12). The alpha and beta chains form an alternating ring which encloses part of the gamma chain. CF(1) is attached to CF(0) by a central stalk formed by the gamma and epsilon chains, while a peripheral stalk is formed by the delta and b chains.

Its subcellular location is the cell inner membrane. It catalyses the reaction ATP + H2O + 4 H(+)(in) = ADP + phosphate + 5 H(+)(out). In terms of biological role, produces ATP from ADP in the presence of a proton gradient across the membrane. The alpha chain is a regulatory subunit. This chain is ATP synthase subunit alpha, found in Pseudoalteromonas translucida (strain TAC 125).